The following is a 78-amino-acid chain: Putative defensin-like protein 202 (78 aa).

Positions M1–G29 are cleaved as a signal peptide. Cystine bridges form between C44/C65, C49/C74, and C53/C76.

This sequence belongs to the DEFL family.

Its subcellular location is the secreted. The sequence is that of Putative defensin-like protein 202 from Arabidopsis thaliana (Mouse-ear cress).